The sequence spans 872 residues: DNA mismatch repair protein MutS (872 aa).

632-639 (GPNMGGKS) lines the ATP pocket.

It belongs to the DNA mismatch repair MutS family.

This protein is involved in the repair of mismatches in DNA. It is possible that it carries out the mismatch recognition step. This protein has a weak ATPase activity. The polypeptide is DNA mismatch repair protein MutS (Colwellia psychrerythraea (strain 34H / ATCC BAA-681) (Vibrio psychroerythus)).